A 299-amino-acid polypeptide reads, in one-letter code: Deoxyribonuclease-1-like 2 (299 aa).

The first 20 residues, 1–20 (MGGPRALLAALWALEAAGTA), serve as a signal peptide directing secretion. Catalysis depends on residues Glu-99 and His-170. The cysteines at positions 209 and 245 are disulfide-linked.

It belongs to the DNase I family. Mg(2+) serves as cofactor. Ca(2+) is required as a cofactor. Preferentially expressed in the skin and up-regulated during keratinocytes differentiation. Highly abundant (at protein level) in the stratum granulosum.

It localises to the cytoplasm. The protein resides in the secreted. Its function is as follows. Divalent cation-dependent acid DNA endonuclease involved in the breakdown of the nucleus during corneocyte formation of epidermal keratinocytes. May play an immune role by eliminating harmful DNA released into the extracellular environment by damaged epidermal cells. In Homo sapiens (Human), this protein is Deoxyribonuclease-1-like 2 (DNASE1L2).